A 492-amino-acid polypeptide reads, in one-letter code: Virion host shutoff protein (492 aa).

Disordered stretches follow at residues 110 to 130, 143 to 165, 288 to 307, and 334 to 369; these read EEAS…SRPS, FAPG…GAPS, SQAR…LESM, and EDDY…PPEL. The span at 144–165 shows a compositional bias: low complexity; it reads APGDRGTRAAGPGPAAPSGAPS.

The protein belongs to the herpesviridae VHS protein family. Interacts with human EIF4H, EIF4A1 and EIF4A2; interaction with eIF4AI and EIF4A2 presumably allows Vhs protein to associate with the eIF4F cap-binding complex.

It is found in the virion. Its function is as follows. Minor structural protein that acts as an endoribonuclease during lytic infection. Degrades host mRNAs in the cytoplasm by cutting them at preferred sites, including some in regions of translation initiation. Together with inhibition of host splicing by ICP27, contributes to an overall decrease in host protein synthesis. Also, after the onset of viral transcription, accelerates the turnover of viral mRNA, thereby facilitating the sequential expression of different classes of viral genes. Binds translation initiation factors eIF4H, eIF4AI, and eIF4AII, thereby may interact directly with the translation initiation complex and thus digest specifically mRNAs. Also impedes antigen presentation by major histocompatibility complex class I and class II molecules, inhibits secretion of cytokines that would otherwise recruit lymphocytes and neutrophils cells to the site of infection and blocks the activation of dendritic cells. Impedes the alpha/beta interferon-mediated response to infection. Inhibits the integrated stress response (ISR) in the infected cell, this function requires the endonuclease activity. Stress granule formation is thus inhibited, which allows protein synthesis and viral replication. In Human herpesvirus 2 (strain G) (HHV-2), this protein is Virion host shutoff protein (UL41).